We begin with the raw amino-acid sequence, 847 residues long: Rho GTPase-activating protein 12 (847 aa).

The SH3 domain maps to 12-74; sequence PGQAYIEVEY…PAQYVKEVTR (63 aa). Residues 110–241 form a disordered region; that stretch reads LPELSSFGKP…PPNQGRPDSP (132 aa). 2 stretches are compositionally biased toward polar residues: residues 117–174 and 191–200; these read GKPS…QNRT and TSFSQEQSCD. Ser165 carries the phosphoserine modification. A phosphoserine mark is found at Ser201, Ser213, and Ser215. Over residues 224-234 the composition is skewed to polar residues; the sequence is TEQIRATTPPN. Residues Thr230 and Thr231 each carry the phosphothreonine modification. The residue at position 240 (Ser240) is a Phosphoserine. At Tyr243 the chain carries Phosphotyrosine. 2 consecutive WW domains span residues 265–298 and 358–391; these read IQINGEWETHKDSSGRCYYYDRGTQERTWKPPRW and DYTNEKWLKHIDDQGRQYYYSADGSRSEWELPKY. The disordered stretch occupies residues 293–317; it reads WKPPRWTRDASISKGDFQSPGDQEL. Disordered stretches follow at residues 428–466 and 591–625; these read DTNDKESPTASKPCFPENESSPSSPKHQDTASSPKDQEK and PDSPGIEKHDKEKEQKDPKKLRSFKVSSIDSSEQK. The span at 445 to 461 shows a compositional bias: polar residues; sequence NESSPSSPKHQDTASSP. Residues 463–575 form the PH domain; that stretch reads DQEKYGLLNV…WFKVLSSTIN (113 aa). Ser593 carries the post-translational modification Phosphoserine. Positions 595-610 are enriched in basic and acidic residues; sequence GIEKHDKEKEQKDPKK. One can recognise a Rho-GAP domain in the interval 657–845; that stretch reads SNLANLCQRE…LILLELSSIF (189 aa).

Functionally, GTPase activator for the Rho-type GTPases by converting them to an inactive GDP-bound state. The protein is Rho GTPase-activating protein 12 (ARHGAP12) of Macaca fascicularis (Crab-eating macaque).